Here is a 152-residue protein sequence, read N- to C-terminus: uncharacterized protein (152 aa).

Helical transmembrane passes span 15–35 (IINV…IYDI), 43–63 (LVVA…LILT), and 117–137 (TFLL…KLLI).

The protein to M.jannaschii MJ0129 and MJ0587.

The protein localises to the cell membrane. This is an uncharacterized protein from Methanocaldococcus jannaschii (strain ATCC 43067 / DSM 2661 / JAL-1 / JCM 10045 / NBRC 100440) (Methanococcus jannaschii).